Consider the following 300-residue polypeptide: tRNA dimethylallyltransferase (300 aa).

11–18 (GPTAVGKS) contacts ATP. 13 to 18 (TAVGKS) is a substrate binding site. The tract at residues 35–38 (DSVQ) is interaction with substrate tRNA.

Belongs to the IPP transferase family. Monomer. The cofactor is Mg(2+).

It carries out the reaction adenosine(37) in tRNA + dimethylallyl diphosphate = N(6)-dimethylallyladenosine(37) in tRNA + diphosphate. In terms of biological role, catalyzes the transfer of a dimethylallyl group onto the adenine at position 37 in tRNAs that read codons beginning with uridine, leading to the formation of N6-(dimethylallyl)adenosine (i(6)A). In Borrelia hermsii (strain HS1 / DAH), this protein is tRNA dimethylallyltransferase.